Here is a 230-residue protein sequence, read N- to C-terminus: RING finger protein 141 (230 aa).

The RING-type zinc-finger motif lies at 154-191 (ECCICMDGRVDLILPCAHSFCQKCIDKWSDRHRSCPVC).

This is RING finger protein 141 (RNF141) from Gallus gallus (Chicken).